A 227-amino-acid polypeptide reads, in one-letter code: Germin-like protein subfamily 3 member 2 (227 aa).

The first 24 residues, 1–24 (MEANTLFLLKALCLLCFNVCFTLA), serve as a signal peptide directing secretion. A disulfide bridge connects residues Cys34 and Cys54. N-linked (GlcNAc...) asparagine glycans are attached at residues Asn56 and Asn75. A Cupin type-1 domain is found at 68–213 (SGLKTAGNFT…AFGLSLKQIG (146 aa)). 4 residues coordinate Mn(2+): His115, His117, Glu122, and His161.

This sequence belongs to the germin family. In terms of assembly, oligomer (believed to be a pentamer but probably hexamer).

It is found in the secreted. Its subcellular location is the extracellular space. The protein resides in the apoplast. May play a role in plant defense. Probably has no oxalate oxidase activity even if the active site is conserved. In Arabidopsis thaliana (Mouse-ear cress), this protein is Germin-like protein subfamily 3 member 2.